The chain runs to 1601 residues: Polycomb group protein Psc (1601 aa).

Disordered regions lie at residues 1 to 91 (MMTP…TTTT) and 165 to 245 (NGIK…DLAT). Low complexity-rich tracts occupy residues 8–91 (AIQP…TTTT) and 182–198 (SSSSSSSSSSSSSSSSS). Residues 199-215 (WPTTRRATSEDASSNGG) show a composition bias toward polar residues. Residues 228–245 (TAAVAASSTATTTSDLAT) are compositionally biased toward low complexity. The RING-type zinc-finger motif lies at 263-302 (CHLCQGYLINATTIVECLHSFCHSCLINHLRKERFCPRCE). Disordered stretches follow at residues 561–693 (KREK…FSED), 711–856 (VESP…NRTP), 895–960 (IGGG…SNNY), 1011–1097 (YKYT…EKQQ), 1116–1315 (SITI…LAPK), 1330–1408 (NPAA…HPVM), and 1512–1601 (AATG…TKSK). Positions 567–590 (SPQMSSKSSSKSSPCTPVSSPSEP) are enriched in low complexity. Residues 611–637 (DPERREIVKPLKPEKESRSKKKDKDGS) are compositionally biased toward basic and acidic residues. The span at 638–649 (PKSSSSSSSSSS) shows a compositional bias: low complexity. Phosphoserine occurs at positions 656 and 658. The span at 676-689 (SGVSTLSPRVTSGA) shows a compositional bias: polar residues. Low complexity predominate over residues 729–739 (SVQQSASPKSK). Over residues 812–822 (LMPPPAKPPML) the composition is skewed to pro residues. The span at 929 to 938 (TTPSQGNKNV) shows a compositional bias: polar residues. Low complexity predominate over residues 1011 to 1022 (YKYTPKPTPNSG). Positions 1036–1045 (LGGGNGGSLG) are enriched in gly residues. Over residues 1069-1085 (SSATQSGGNNGIVNNNI) the composition is skewed to low complexity. Residues 1116–1133 (SITISRDNGDSSSPNNGQ) show a composition bias toward polar residues. S1139 bears the Phosphoserine mark. The span at 1204–1217 (PQLPKVATPPPPSS) shows a compositional bias: pro residues. Phosphothreonine occurs at positions 1222, 1236, and 1251. Residues 1247–1258 (VDKKTPSPEKRT) show a composition bias toward basic and acidic residues. 3 positions are modified to phosphoserine: S1253, S1266, and S1274. Polar residues predominate over residues 1261 to 1272 (QMGSHSPTASEN). Composition is skewed to polar residues over residues 1352–1375 (QSGQQKLVNGGQSQPAQQKTSPPA) and 1561–1587 (APQTKGNSSSGAANARQQTAATGNNGA).

As to quaternary structure, component of PRC1 complex, which contains many PcG proteins like Pc, ph, Scm, Psc, Sce and also chromatin-remodeling proteins such as histone deacetylases. This complex is distinct from the Esc/E(z) complex, at least composed of esc, E(z), Su(z)12, HDAC1/Rpd3 and Caf1-55. The 2 complexes however cooperate and interact together during the first 3 hours of development to establish PcG silencing.

Its subcellular location is the nucleus. In terms of biological role, polycomb group (PcG) protein. PcG proteins act by forming multiprotein complexes, which are required to maintain the transcriptionally repressive state of homeotic genes throughout development. PcG proteins are not required to initiate repression, but to maintain it during later stages of development. Component of the PcG multiprotein PRC1 complex, a complex that acts via chromatin remodeling and modification of histones; it mediates monoubiquitination of histone H2A 'Lys-118', rendering chromatin heritably changed in its expressibility. Needed to maintain expression patterns of the homeotic selector genes of the Antennapedia (Antp-C) and Bithorax (BX-C) complexes, and hence for the maintenance of segmental determination. The protein is Polycomb group protein Psc (Psc) of Drosophila melanogaster (Fruit fly).